The primary structure comprises 103 residues: Large ribosomal subunit protein bL21 (103 aa).

The protein belongs to the bacterial ribosomal protein bL21 family. As to quaternary structure, part of the 50S ribosomal subunit. Contacts protein L20.

Its function is as follows. This protein binds to 23S rRNA in the presence of protein L20. The protein is Large ribosomal subunit protein bL21 of Acetivibrio thermocellus (strain ATCC 27405 / DSM 1237 / JCM 9322 / NBRC 103400 / NCIMB 10682 / NRRL B-4536 / VPI 7372) (Clostridium thermocellum).